We begin with the raw amino-acid sequence, 264 residues long: MNRDNINSNKTVKQEFGSFAFVICIALVIRILIMEPFTVPTGSMKATILENDYIFSTKYSYGYSNYSLSFFDFIHLFKGRVFAREPERGDIVVFRPPNDMSVRYIKRLIGLPGDKIQLIDDVIYINDKKIERTEVGTYIGEDGIKYLKFKETLPNGRTYFSYKLAPIFGVIPSDRYSNTDVFYVPEGQYFFLGDNRDRSNDSRVNLGFVPFENFIAKAQFIWFSTKITWWDNDIGIINLILKLKPWIESVRLSRIFKNLYNVDE.

Residues 1–18 (MNRDNINSNKTVKQEFGS) lie on the Cytoplasmic side of the membrane. The helical transmembrane segment at 19 to 39 (FAFVICIALVIRILIMEPFTV) threads the bilayer. Topologically, residues 40 to 264 (PTGSMKATIL…IFKNLYNVDE (225 aa)) are extracellular. Catalysis depends on residues Ser-43 and Lys-106.

It belongs to the peptidase S26 family.

Its subcellular location is the cell membrane. The catalysed reaction is Cleavage of hydrophobic, N-terminal signal or leader sequences from secreted and periplasmic proteins.. The polypeptide is Signal peptidase I (lepB) (Rickettsia prowazekii (strain Madrid E)).